A 58-amino-acid polypeptide reads, in one-letter code: Small ribosomal subunit protein bS21 (58 aa).

Belongs to the bacterial ribosomal protein bS21 family.

The polypeptide is Small ribosomal subunit protein bS21 (Picosynechococcus sp. (strain ATCC 27264 / PCC 7002 / PR-6) (Agmenellum quadruplicatum)).